We begin with the raw amino-acid sequence, 177 residues long: Large ribosomal subunit protein uL6 (177 aa).

It belongs to the universal ribosomal protein uL6 family. In terms of assembly, part of the 50S ribosomal subunit.

In terms of biological role, this protein binds to the 23S rRNA, and is important in its secondary structure. It is located near the subunit interface in the base of the L7/L12 stalk, and near the tRNA binding site of the peptidyltransferase center. In Rhodopseudomonas palustris (strain BisA53), this protein is Large ribosomal subunit protein uL6.